We begin with the raw amino-acid sequence, 279 residues long: 3-methyl-2-oxobutanoate hydroxymethyltransferase (279 aa).

Mg(2+) contacts are provided by Asp49 and Asp88. 3-methyl-2-oxobutanoate contacts are provided by residues 49-50 (DS), Asp88, and Lys118. A Mg(2+)-binding site is contributed by Glu120. The active-site Proton acceptor is Glu187.

The protein belongs to the PanB family. In terms of assembly, homodecamer; pentamer of dimers. Mg(2+) serves as cofactor.

The protein localises to the cytoplasm. It carries out the reaction 3-methyl-2-oxobutanoate + (6R)-5,10-methylene-5,6,7,8-tetrahydrofolate + H2O = 2-dehydropantoate + (6S)-5,6,7,8-tetrahydrofolate. It participates in cofactor biosynthesis; (R)-pantothenate biosynthesis; (R)-pantoate from 3-methyl-2-oxobutanoate: step 1/2. Its function is as follows. Catalyzes the reversible reaction in which hydroxymethyl group from 5,10-methylenetetrahydrofolate is transferred onto alpha-ketoisovalerate to form ketopantoate. The protein is 3-methyl-2-oxobutanoate hydroxymethyltransferase of Agrobacterium fabrum (strain C58 / ATCC 33970) (Agrobacterium tumefaciens (strain C58)).